Here is a 219-residue protein sequence, read N- to C-terminus: Probable glutathione S-transferase MSR-1 (219 aa).

In terms of domain architecture, GST N-terminal spans 4 to 83 (NNVVLLDFSG…YIDEVWHEKC (80 aa)). Residues serine 14, lysine 41, isoleucine 55, and 67–68 (ES) contribute to the glutathione site. Positions 89-208 (DPYQRSQARF…LPHPHKIYDF (120 aa)) constitute a GST C-terminal domain.

Belongs to the GST superfamily. HSP26 family.

The catalysed reaction is RX + glutathione = an S-substituted glutathione + a halide anion + H(+). May play an important role in hormonal and growth regulatory responses. The chain is Probable glutathione S-transferase MSR-1 (MSR-1) from Nicotiana plumbaginifolia (Leadwort-leaved tobacco).